The chain runs to 334 residues: S-adenosylmethionine:tRNA ribosyltransferase-isomerase (334 aa).

The protein belongs to the QueA family. Monomer.

The protein resides in the cytoplasm. It catalyses the reaction 7-aminomethyl-7-carbaguanosine(34) in tRNA + S-adenosyl-L-methionine = epoxyqueuosine(34) in tRNA + adenine + L-methionine + 2 H(+). The protein operates within tRNA modification; tRNA-queuosine biosynthesis. In terms of biological role, transfers and isomerizes the ribose moiety from AdoMet to the 7-aminomethyl group of 7-deazaguanine (preQ1-tRNA) to give epoxyqueuosine (oQ-tRNA). In Rubrobacter xylanophilus (strain DSM 9941 / JCM 11954 / NBRC 16129 / PRD-1), this protein is S-adenosylmethionine:tRNA ribosyltransferase-isomerase.